We begin with the raw amino-acid sequence, 217 residues long: Peroxiredoxin (217 aa).

The region spanning 2–159 (VVIGEKFPEV…IVRLVKALQT (158 aa)) is the Thioredoxin domain. The Cysteine sulfenic acid (-SOH) intermediate role is filled by C46. R122 contributes to the substrate binding site.

This sequence belongs to the peroxiredoxin family. Prx6 subfamily. As to quaternary structure, homodecamer. Pentamer of dimers that assemble into a ring structure.

The protein resides in the cytoplasm. It carries out the reaction a hydroperoxide + [thioredoxin]-dithiol = an alcohol + [thioredoxin]-disulfide + H2O. Thiol-specific peroxidase that catalyzes the reduction of hydrogen peroxide and organic hydroperoxides to water and alcohols, respectively. Plays a role in cell protection against oxidative stress by detoxifying peroxides. The protein is Peroxiredoxin of Methanococcus maripaludis (strain DSM 14266 / JCM 13030 / NBRC 101832 / S2 / LL).